We begin with the raw amino-acid sequence, 1220 residues long: Deubiquitinating protein VCPIP1 (1220 aa).

Residues 1–19 (MSQPPPPPPLPPPPPPPEA) are compositionally biased toward pro residues. Residues 1–40 (MSQPPPPPPLPPPPPPPEAPQTSSSLAAAASPGGLSKRRD) are disordered. A compositionally biased stretch (low complexity) spans 20 to 35 (PQTSSSLAAAASPGGL). Residues 207–360 (LIPVHVDGDG…RNHYIPLVGI (154 aa)) enclose the OTU domain. The active site involves aspartate 215. The Nucleophile role is filled by cysteine 218. The active site involves histidine 353. Position 407 is an N6-acetyllysine (lysine 407). Disordered regions lie at residues 724–778 (SVMQ…KIRI) and 988–1008 (EATT…LGSG). Phosphoserine occurs at positions 746 and 756. Positions 754–770 (PSSAPATPTKAPYSPTT) are enriched in low complexity. Threonine 762 carries the phosphothreonine modification. A phosphoserine mark is found at serine 767, serine 993, serine 997, and serine 1076. Disordered regions lie at residues 1113 to 1140 (SSIQ…QRKV) and 1185 to 1220 (FATR…MDHS). A phosphoserine mark is found at serine 1196 and serine 1205. Acidic residues predominate over residues 1197–1207 (MEEPEEMDSQD). A compositionally biased stretch (polar residues) spans 1208-1220 (AETTNTTEPMDHS).

As to quaternary structure, binds VCP and the ternary complex containing STX5A, NSFL1C and VCP. In terms of processing, phosphorylated at Ser-1205 by ATM or ATR following induction of covalent DNA-protein cross-links (DPCs).

It is found in the nucleus. Its subcellular location is the cytoplasm. The protein localises to the endoplasmic reticulum. The protein resides in the golgi apparatus. It localises to the golgi stack. It carries out the reaction Thiol-dependent hydrolysis of ester, thioester, amide, peptide and isopeptide bonds formed by the C-terminal Gly of ubiquitin (a 76-residue protein attached to proteins as an intracellular targeting signal).. Its function is as follows. Deubiquitinating enzyme involved in DNA repair and reassembly of the Golgi apparatus and the endoplasmic reticulum following mitosis. Necessary for VCP-mediated reassembly of Golgi stacks after mitosis. Plays a role in VCP-mediated formation of transitional endoplasmic reticulum (tER). Mediates dissociation of the ternary complex containing STX5A, NSFL1C and VCP. Also involved in DNA repair following phosphorylation by ATM or ATR: acts by catalyzing deubiquitination of SPRTN, thereby promoting SPRTN recruitment to chromatin and subsequent proteolytic cleavage of covalent DNA-protein cross-links (DPCs). Hydrolyzes 'Lys-11'- and 'Lys-48'-linked polyubiquitin chains. The sequence is that of Deubiquitinating protein VCPIP1 from Mus musculus (Mouse).